Here is a 337-residue protein sequence, read N- to C-terminus: Ketol-acid reductoisomerase (NADP(+)) (337 aa).

The KARI N-terminal Rossmann domain maps to 1-180 (MKIYYDTDVN…GGGRAGIIET (180 aa)). NADP(+) contacts are provided by residues 24 to 27 (YGSQ), R47, S51, and 81 to 84 (DELQ). H106 is a catalytic residue. NADP(+) is bound at residue G132. A KARI C-terminal knotted domain is found at 181–326 (TFKDETETDL…EKLRAMMPWL (146 aa)). D189, E193, E225, and E229 together coordinate Mg(2+). S250 is a substrate binding site.

Belongs to the ketol-acid reductoisomerase family. Requires Mg(2+) as cofactor.

It carries out the reaction (2R)-2,3-dihydroxy-3-methylbutanoate + NADP(+) = (2S)-2-acetolactate + NADPH + H(+). It catalyses the reaction (2R,3R)-2,3-dihydroxy-3-methylpentanoate + NADP(+) = (S)-2-ethyl-2-hydroxy-3-oxobutanoate + NADPH + H(+). The protein operates within amino-acid biosynthesis; L-isoleucine biosynthesis; L-isoleucine from 2-oxobutanoate: step 2/4. It participates in amino-acid biosynthesis; L-valine biosynthesis; L-valine from pyruvate: step 2/4. Involved in the biosynthesis of branched-chain amino acids (BCAA). Catalyzes an alkyl-migration followed by a ketol-acid reduction of (S)-2-acetolactate (S2AL) to yield (R)-2,3-dihydroxy-isovalerate. In the isomerase reaction, S2AL is rearranged via a Mg-dependent methyl migration to produce 3-hydroxy-3-methyl-2-ketobutyrate (HMKB). In the reductase reaction, this 2-ketoacid undergoes a metal-dependent reduction by NADPH to yield (R)-2,3-dihydroxy-isovalerate. This chain is Ketol-acid reductoisomerase (NADP(+)), found in Thermodesulfovibrio yellowstonii (strain ATCC 51303 / DSM 11347 / YP87).